The following is a 968-amino-acid chain: RNA polymerase-associated protein RapA (968 aa).

Positions 164 to 334 (DVGRRHAPRV…FARLRLLDPN (171 aa)) constitute a Helicase ATP-binding domain. Residue 177–184 (DEVGLGKT) coordinates ATP. A DEAH box motif is present at residues 280 to 283 (DEAH). Residues 490-662 (RVEWLMGYLT…YLASPDQTEG (173 aa)) enclose the Helicase C-terminal domain.

The protein belongs to the SNF2/RAD54 helicase family. RapA subfamily. In terms of assembly, interacts with the RNAP. Has a higher affinity for the core RNAP than for the holoenzyme. Its ATPase activity is stimulated by binding to RNAP.

In terms of biological role, transcription regulator that activates transcription by stimulating RNA polymerase (RNAP) recycling in case of stress conditions such as supercoiled DNA or high salt concentrations. Probably acts by releasing the RNAP, when it is trapped or immobilized on tightly supercoiled DNA. Does not activate transcription on linear DNA. Probably not involved in DNA repair. The chain is RNA polymerase-associated protein RapA from Escherichia fergusonii (strain ATCC 35469 / DSM 13698 / CCUG 18766 / IAM 14443 / JCM 21226 / LMG 7866 / NBRC 102419 / NCTC 12128 / CDC 0568-73).